A 122-amino-acid chain; its full sequence is Large ribosomal subunit protein uL18 (122 aa).

It belongs to the universal ribosomal protein uL18 family. Part of the 50S ribosomal subunit; part of the 5S rRNA/L5/L18/L25 subcomplex. Contacts the 5S and 23S rRNAs.

Its function is as follows. This is one of the proteins that bind and probably mediate the attachment of the 5S RNA into the large ribosomal subunit, where it forms part of the central protuberance. This chain is Large ribosomal subunit protein uL18, found in Geobacter sp. (strain M21).